The chain runs to 420 residues: Glutamyl-tRNA reductase (420 aa).

Substrate is bound by residues Thr-49–Arg-52, Ser-109, Glu-114–Gln-116, and Gln-120. The active-site Nucleophile is Cys-50. Gly-189–Ile-194 contacts NADP(+).

This sequence belongs to the glutamyl-tRNA reductase family. Homodimer.

The enzyme catalyses (S)-4-amino-5-oxopentanoate + tRNA(Glu) + NADP(+) = L-glutamyl-tRNA(Glu) + NADPH + H(+). Its pathway is porphyrin-containing compound metabolism; protoporphyrin-IX biosynthesis; 5-aminolevulinate from L-glutamyl-tRNA(Glu): step 1/2. In terms of biological role, catalyzes the NADPH-dependent reduction of glutamyl-tRNA(Glu) to glutamate 1-semialdehyde (GSA). This is Glutamyl-tRNA reductase from Photorhabdus laumondii subsp. laumondii (strain DSM 15139 / CIP 105565 / TT01) (Photorhabdus luminescens subsp. laumondii).